The sequence spans 388 residues: MENQFKNNNNSSSIETSNQFSNKKTNRLDSFVSVSELHEEAKRLLPKMAYDYYASGSNDQITLAENENAFSRIKLVPRSLVDVSKVNTKTRIFGRDISTPILIAPWAMQRMASQRGELDTVEASKEFNTIMTLSSLSTTSVEDLSSATNGNPGWFQLYVFKDRKVSEELVKRAESIGYSALVLTVDTPFLGKRTADFKNSFKLPNGLSLKIFEKLMLSNLDGGLNQYIATMIDPSLTWNDLKWLKSITKLPILVKGIMCPKDAELALQYGADGIIVSNHGGRQLDTCPSTIEVLPYISKVVRGRVPLILDGGIRRGTDVLKALAFGANAVCIGRPIIWGLSTGGKDGVLKVLNLLNSELQLAMALTGITNISDINNSIIWDQNKYIKL.

The interval 1–21 (MENQFKNNNNSSSIETSNQFS) is disordered. Positions 26-384 (NRLDSFVSVS…NNSIIWDQNK (359 aa)) constitute an FMN hydroxy acid dehydrogenase domain. Tyrosine 52 serves as a coordination point for glyoxylate. FMN contacts are provided by residues 105–107 (PWA), serine 134, 156–158 (QLY), and threonine 184. Residue tyrosine 158 coordinates glyoxylate. Arginine 193 lines the glyoxylate pocket. Residues lysine 255 and serine 277 each contribute to the FMN site. Glyoxylate-binding residues include histidine 279 and arginine 282. Histidine 279 functions as the Proton acceptor in the catalytic mechanism. Residues 310–314 (DGGIR) and 333–334 (GR) contribute to the FMN site.

It belongs to the FMN-dependent alpha-hydroxy acid dehydrogenase family. Homotetramer. FMN serves as cofactor.

It carries out the reaction glycolate + O2 = glyoxylate + H2O2. It catalyses the reaction a (2S)-2-hydroxycarboxylate + O2 = a 2-oxocarboxylate + H2O2. Catalyzes the oxidation of glycolate to glyoxylate, with a reduction of O2 to H2O2. May use other 2-hydroxyacids as substrates. This Dictyostelium discoideum (Social amoeba) protein is 2-Hydroxyacid oxidase (haox).